Consider the following 342-residue polypeptide: MNSIDLPSLAQALADSTPTIRHNWTREEAAAIYHAPFADLIFRAQTIHRQSFDANAVQCNQLLNVKTGGCAEDCGYCSQSSHHDTALPASKLMDPAKVIEGAKAARDAGATRYCMGAAWRSPKDRDMAPVIEMVKGVKALGMEACMTLGMLTDDQAKQLADAGLDYYNHNIDTSEEFYSSVVKTRSFGDRLETLEKVQDAGIKVCCGGILGLGEKPTDRVEMLRTLANLPQHPESVPINMLIPIEGTPIAATATPVDPFEFVRTIALARIMMPKSDVRLAAGRTAMSDEMQALCFLAGANSIFIGDTLLTTPNPGDSKDRALFARLGITPRDDLGVHAHGNA.

The Radical SAM core domain maps to 55–274; sequence NAVQCNQLLN…IALARIMMPK (220 aa). The [4Fe-4S] cluster site is built by C70, C74, and C77. 4 residues coordinate [2Fe-2S] cluster: C114, C145, C205, and R278.

This sequence belongs to the radical SAM superfamily. Biotin synthase family. Homodimer. The cofactor is [4Fe-4S] cluster. [2Fe-2S] cluster serves as cofactor.

It catalyses the reaction (4R,5S)-dethiobiotin + (sulfur carrier)-SH + 2 reduced [2Fe-2S]-[ferredoxin] + 2 S-adenosyl-L-methionine = (sulfur carrier)-H + biotin + 2 5'-deoxyadenosine + 2 L-methionine + 2 oxidized [2Fe-2S]-[ferredoxin]. The protein operates within cofactor biosynthesis; biotin biosynthesis; biotin from 7,8-diaminononanoate: step 2/2. Functionally, catalyzes the conversion of dethiobiotin (DTB) to biotin by the insertion of a sulfur atom into dethiobiotin via a radical-based mechanism. This Rhodopseudomonas palustris (strain BisB5) protein is Biotin synthase.